The following is a 279-amino-acid chain: Thymidylate synthase (279 aa).

133-134 (RR) contacts dUMP. The active-site Nucleophile is Cys-154. DUMP contacts are provided by residues 178–181 (RSND), Asn-189, and 219–221 (HIY). Residue Asp-181 coordinates (6R)-5,10-methylene-5,6,7,8-tetrahydrofolate. Ala-278 is a binding site for (6R)-5,10-methylene-5,6,7,8-tetrahydrofolate.

It belongs to the thymidylate synthase family. Bacterial-type ThyA subfamily. Homodimer.

It is found in the cytoplasm. It carries out the reaction dUMP + (6R)-5,10-methylene-5,6,7,8-tetrahydrofolate = 7,8-dihydrofolate + dTMP. The protein operates within pyrimidine metabolism; dTTP biosynthesis. In terms of biological role, catalyzes the reductive methylation of 2'-deoxyuridine-5'-monophosphate (dUMP) to 2'-deoxythymidine-5'-monophosphate (dTMP) while utilizing 5,10-methylenetetrahydrofolate (mTHF) as the methyl donor and reductant in the reaction, yielding dihydrofolate (DHF) as a by-product. This enzymatic reaction provides an intracellular de novo source of dTMP, an essential precursor for DNA biosynthesis. The sequence is that of Thymidylate synthase from Streptococcus agalactiae serotype Ia (strain ATCC 27591 / A909 / CDC SS700).